Here is a 180-residue protein sequence, read N- to C-terminus: MKQCIAFMAILALSLSAISEAKGGRGVRSSGYSRPVATKPAPAPKQTQTQQQSQQPDATFGQQNMQNTATNTPNNPNNRLASFATGAAAGYLLSEVLSPTEAQAQMATDQPLQPLNAQPNQSTVATFKALDQSNPAWVGMAGEQNLFCLNGALYLVNKNNHQIGAVTDNQAQAIACQVTQ.

A signal peptide spans 1 to 21 (MKQCIAFMAILALSLSAISEA). Positions 23-81 (GGRGVRSSGYSRPVATKPAPAPKQTQTQQQSQQPDATFGQQNMQNTATNTPNNPNNRLA) are disordered. Positions 27 to 78 (VRSSGYSRPVATKPAPAPKQTQTQQQSQQPDATFGQQNMQNTATNTPNNPNN) are enriched in low complexity.

This is an uncharacterized protein from Pasteurella multocida (strain Pm70).